The primary structure comprises 230 residues: Heptaprenylglyceryl phosphate synthase (230 aa).

Residue Lys-12 coordinates sn-glycerol 1-phosphate. Asp-14 and Thr-40 together coordinate Mg(2+). Sn-glycerol 1-phosphate-binding positions include Tyr-159–Gly-164, Gly-189, and Gly-209–Asp-210.

Belongs to the GGGP/HepGP synthase family. Group I subfamily. As to quaternary structure, homodimer. Mg(2+) is required as a cofactor.

It catalyses the reaction sn-glycerol 1-phosphate + all-trans-heptaprenyl diphosphate = 3-heptaprenyl-sn-glycero-1-phosphate + diphosphate. It participates in membrane lipid metabolism; glycerophospholipid metabolism. In terms of biological role, prenyltransferase that catalyzes in vivo the transfer of the heptaprenyl moiety of heptaprenyl pyrophosphate (HepPP; 35 carbon atoms) to the C3 hydroxyl of sn-glycerol-1-phosphate (G1P), producing heptaprenylglyceryl phosphate (HepGP). This reaction is an ether-bond-formation step in the biosynthesis of archaea-type G1P-based membrane lipids found in Bacillales. The polypeptide is Heptaprenylglyceryl phosphate synthase (Staphylococcus aureus (strain Mu3 / ATCC 700698)).